Reading from the N-terminus, the 185-residue chain is Large ribosomal subunit protein uL16m (185 aa).

It belongs to the universal ribosomal protein uL16 family.

It is found in the mitochondrion. This is Large ribosomal subunit protein uL16m (RPL16) from Oryza sativa subsp. japonica (Rice).